A 191-amino-acid polypeptide reads, in one-letter code: MSEKKNKKERLADEIEQEELNILDEAEEAVEEEATADTLTEEQAKILELENKLDEVENRYLRMQADFENVKKRHIADRDASQKYRSQSLAQDLLPALDSFEKALATTSDQEEVKQILKGMEMVYNQILIAFEKEGIEVIPAVGEQFDPNFHQAVMQDSDENAGSNEITAELQKGYKLKDRVIRPSMVKVNQ.

It belongs to the GrpE family. In terms of assembly, homodimer.

It is found in the cytoplasm. Functionally, participates actively in the response to hyperosmotic and heat shock by preventing the aggregation of stress-denatured proteins, in association with DnaK and GrpE. It is the nucleotide exchange factor for DnaK and may function as a thermosensor. Unfolded proteins bind initially to DnaJ; upon interaction with the DnaJ-bound protein, DnaK hydrolyzes its bound ATP, resulting in the formation of a stable complex. GrpE releases ADP from DnaK; ATP binding to DnaK triggers the release of the substrate protein, thus completing the reaction cycle. Several rounds of ATP-dependent interactions between DnaJ, DnaK and GrpE are required for fully efficient folding. The sequence is that of Protein GrpE from Listeria monocytogenes serotype 1/2a (strain 10403S).